Here is a 190-residue protein sequence, read N- to C-terminus: Probable RNA-binding protein 18 (190 aa).

One can recognise an RRM domain in the interval H25–A106. The segment at V166–R190 is disordered.

This is Probable RNA-binding protein 18 (Rbm18) from Mus musculus (Mouse).